Consider the following 288-residue polypeptide: Light-independent protochlorophyllide reductase iron-sulfur ATP-binding protein (288 aa).

ATP-binding positions include 10–15 (GIGKST) and lysine 39. Serine 14 lines the Mg(2+) pocket. Cysteine 95 and cysteine 129 together coordinate [4Fe-4S] cluster. 180–181 (NR) provides a ligand contact to ATP.

The protein belongs to the NifH/BchL/ChlL family. In terms of assembly, homodimer. Protochlorophyllide reductase is composed of three subunits; ChlL, ChlN and ChlB. [4Fe-4S] cluster is required as a cofactor.

The catalysed reaction is chlorophyllide a + oxidized 2[4Fe-4S]-[ferredoxin] + 2 ADP + 2 phosphate = protochlorophyllide a + reduced 2[4Fe-4S]-[ferredoxin] + 2 ATP + 2 H2O. Its pathway is porphyrin-containing compound metabolism; chlorophyll biosynthesis (light-independent). Its function is as follows. Component of the dark-operative protochlorophyllide reductase (DPOR) that uses Mg-ATP and reduced ferredoxin to reduce ring D of protochlorophyllide (Pchlide) to form chlorophyllide a (Chlide). This reaction is light-independent. The L component serves as a unique electron donor to the NB-component of the complex, and binds Mg-ATP. This is Light-independent protochlorophyllide reductase iron-sulfur ATP-binding protein from Nostoc punctiforme (strain ATCC 29133 / PCC 73102).